We begin with the raw amino-acid sequence, 498 residues long: ATP synthase subunit beta, chloroplastic (498 aa).

172-179 contacts ATP; sequence GGAGVGKT.

The protein belongs to the ATPase alpha/beta chains family. F-type ATPases have 2 components, CF(1) - the catalytic core - and CF(0) - the membrane proton channel. CF(1) has five subunits: alpha(3), beta(3), gamma(1), delta(1), epsilon(1). CF(0) has four main subunits: a(1), b(1), b'(1) and c(9-12).

The protein resides in the plastid. Its subcellular location is the chloroplast thylakoid membrane. It carries out the reaction ATP + H2O + 4 H(+)(in) = ADP + phosphate + 5 H(+)(out). Functionally, produces ATP from ADP in the presence of a proton gradient across the membrane. The catalytic sites are hosted primarily by the beta subunits. This Idiospermum australiense (Ribbonwood tree) protein is ATP synthase subunit beta, chloroplastic.